The primary structure comprises 67 residues: MGSLSTLSLNLSHVLALFLVSFILMAPYTAFILKLVKKSDLRTATLTGIVAGILSNPGLFAYMGQWI.

2 helical membrane passes run 10 to 32 (NLSH…TAFI) and 44 to 66 (ATLT…MGQW).

Its subcellular location is the cell membrane. This is an uncharacterized protein from Archaeoglobus fulgidus (strain ATCC 49558 / DSM 4304 / JCM 9628 / NBRC 100126 / VC-16).